We begin with the raw amino-acid sequence, 149 residues long: Large ribosomal subunit protein bL9 (149 aa).

It belongs to the bacterial ribosomal protein bL9 family.

Functionally, binds to the 23S rRNA. This Thiobacillus denitrificans (strain ATCC 25259 / T1) protein is Large ribosomal subunit protein bL9.